The primary structure comprises 621 residues: Chaperone protein dnaK (621 aa).

The interval 597–621 (VYSSTQQDNSKTEDGSVIDTNSKEA) is disordered.

The protein belongs to the heat shock protein 70 family.

It localises to the plastid. The protein resides in the chloroplast. Functionally, acts as a chaperone. The protein is Chaperone protein dnaK of Gracilaria tenuistipitata var. liui (Red alga).